The sequence spans 189 residues: Putative manganese efflux pump MntP (189 aa).

Transmembrane regions (helical) follow at residues 3–23 (PISL…AALG), 41–61 (LIFG…GQVA), 69–89 (DHWI…YNGI), 105–125 (FWIL…VGVG), 133–153 (IVIA…IGVM), and 168–188 (IVGG…HLSA).

It belongs to the MntP (TC 9.B.29) family.

The protein resides in the cell inner membrane. Probably functions as a manganese efflux pump. This Pseudomonas savastanoi pv. phaseolicola (strain 1448A / Race 6) (Pseudomonas syringae pv. phaseolicola (strain 1448A / Race 6)) protein is Putative manganese efflux pump MntP.